Here is a 92-residue protein sequence, read N- to C-terminus: C-C motif chemokine 4 (92 aa).

A signal peptide spans methionine 1 to serine 23. Cystine bridges form between cysteine 34/cysteine 58 and cysteine 35/cysteine 74.

It belongs to the intercrine beta (chemokine CC) family. Homodimer. Interacts with CCR5.

Its subcellular location is the secreted. Its function is as follows. Monokine with inflammatory and chemokinetic properties. In Canis lupus familiaris (Dog), this protein is C-C motif chemokine 4 (CCL4).